The chain runs to 345 residues: Biotin synthase (345 aa).

Residues 38-256 (RQVQVSTLLS…IAVARIMMPS (219 aa)) enclose the Radical SAM core domain. Residues C53, C57, and C60 each coordinate [4Fe-4S] cluster. [2Fe-2S] cluster-binding residues include C97, C128, C188, and R260.

This sequence belongs to the radical SAM superfamily. Biotin synthase family. As to quaternary structure, homodimer. It depends on [4Fe-4S] cluster as a cofactor. [2Fe-2S] cluster serves as cofactor.

The enzyme catalyses (4R,5S)-dethiobiotin + (sulfur carrier)-SH + 2 reduced [2Fe-2S]-[ferredoxin] + 2 S-adenosyl-L-methionine = (sulfur carrier)-H + biotin + 2 5'-deoxyadenosine + 2 L-methionine + 2 oxidized [2Fe-2S]-[ferredoxin]. The protein operates within cofactor biosynthesis; biotin biosynthesis; biotin from 7,8-diaminononanoate: step 2/2. In terms of biological role, catalyzes the conversion of dethiobiotin (DTB) to biotin by the insertion of a sulfur atom into dethiobiotin via a radical-based mechanism. The sequence is that of Biotin synthase from Yersinia pestis bv. Antiqua (strain Antiqua).